Consider the following 449-residue polypeptide: UDP-N-acetylmuramoylalanine--D-glutamate ligase (449 aa).

118-124 is an ATP binding site; it reads GSNGKTT.

Belongs to the MurCDEF family.

The protein resides in the cytoplasm. The catalysed reaction is UDP-N-acetyl-alpha-D-muramoyl-L-alanine + D-glutamate + ATP = UDP-N-acetyl-alpha-D-muramoyl-L-alanyl-D-glutamate + ADP + phosphate + H(+). It participates in cell wall biogenesis; peptidoglycan biosynthesis. In terms of biological role, cell wall formation. Catalyzes the addition of glutamate to the nucleotide precursor UDP-N-acetylmuramoyl-L-alanine (UMA). In Leuconostoc citreum (strain KM20), this protein is UDP-N-acetylmuramoylalanine--D-glutamate ligase.